The following is a 376-amino-acid chain: Glucose-1-phosphate adenylyltransferase (376 aa).

Alpha-D-glucose 1-phosphate is bound by residues Y101, G166, 181–182 (EK), and S192.

It belongs to the bacterial/plant glucose-1-phosphate adenylyltransferase family. As to quaternary structure, homotetramer.

The catalysed reaction is alpha-D-glucose 1-phosphate + ATP + H(+) = ADP-alpha-D-glucose + diphosphate. It participates in glycan biosynthesis; glycogen biosynthesis. Functionally, involved in the biosynthesis of ADP-glucose, a building block required for the elongation reactions to produce glycogen. Catalyzes the reaction between ATP and alpha-D-glucose 1-phosphate (G1P) to produce pyrophosphate and ADP-Glc. The polypeptide is Glucose-1-phosphate adenylyltransferase (Bacillus mycoides (strain KBAB4) (Bacillus weihenstephanensis)).